Consider the following 107-residue polypeptide: Ribonuclease P protein subunit rpr2 (107 aa).

Zn(2+)-binding residues include Cys59, Cys62, Cys93, and Cys96.

Belongs to the eukaryotic/archaeal RNase P protein component 4 family. Zn(2+) is required as a cofactor.

It localises to the cytoplasm. The protein resides in the nucleus. It carries out the reaction Endonucleolytic cleavage of RNA, removing 5'-extranucleotides from tRNA precursor.. Functionally, component of ribonuclease P, a protein complex that generates mature tRNA molecules by cleaving their 5'-ends. This Schizosaccharomyces pombe (strain 972 / ATCC 24843) (Fission yeast) protein is Ribonuclease P protein subunit rpr2 (rpr2).